The following is a 576-amino-acid chain: uncharacterized protein (576 aa).

Polar residues-rich tracts occupy residues 1 to 21 and 28 to 40; these read MSTNPNAGIQPLTNSISQSAS and HTTSHESVSTYQL. Positions 1-40 are disordered; the sequence is MSTNPNAGIQPLTNSISQSASAHPELYHTTSHESVSTYQL. Helical transmembrane passes span 149–169, 173–193, 200–220, 231–251, 261–281, 291–311, 366–386, 401–421, 446–466, 472–492, 503–525, and 542–562; these read FASSVFSVPAEAITTIFHISL, LLTMTVFLCGYIAGPIVWAPL, KLPLLIGMFGFGIFNISVAVA, FFSGFFASAPLTVVAAAFADM, ITIFAALVFDGPLVSPIIGGF, WTEYITSFMGFFALVIVYLFC, PIVFLITLYSSFVYAILYLLL, MGVAELPYIGLLVGVFIGSAI, LPPMMIGCFMFPAGIFWLSWS, VHWIVPTLSGLATGCGILLIF, YLFRAASAVAANTIMRSAMAAGF, and GSLLGFIAVALIPMPFAFFFF.

Belongs to the major facilitator superfamily. CAR1 family.

It is found in the endoplasmic reticulum. The protein resides in the golgi apparatus. The protein localises to the membrane. This is an uncharacterized protein from Schizosaccharomyces pombe (strain 972 / ATCC 24843) (Fission yeast).